The sequence spans 521 residues: Beta-glucosidase 11 (521 aa).

The first 23 residues, 1–23 (MKLLSNSLMFLPLLALALTAVSS), serve as a signal peptide directing secretion. A beta-D-glucoside-binding positions include Q45, H144, and 189-190 (NE). E190 serves as the catalytic Proton donor. C209 and C217 form a disulfide bridge. N-linked (GlcNAc...) asparagine glycans are attached at residues N216 and N221. Y356 serves as a coordination point for a beta-D-glucoside. N-linked (GlcNAc...) asparagine glycosylation is found at N364 and N388. Residues E422, W466, and F482 each coordinate a beta-D-glucoside. E422 serves as the catalytic Nucleophile.

This sequence belongs to the glycosyl hydrolase 1 family.

The catalysed reaction is Hydrolysis of terminal, non-reducing beta-D-glucosyl residues with release of beta-D-glucose.. This chain is Beta-glucosidase 11, found in Arabidopsis thaliana (Mouse-ear cress).